The following is a 304-amino-acid chain: Protoheme IX farnesyltransferase (304 aa).

9 consecutive transmembrane segments (helical) span residues 31–51 (VNTL…PDGL), 58–78 (VAAT…NCLI), 99–119 (LAPA…LTVL), 126–146 (LTMW…TVLL), 154–174 (IVIG…AVTG), 180–200 (ALLL…ALAL), 222–242 (FTRL…LLPF), 243–263 (ATRM…IGFL), and 284–304 (FSIL…YLPL).

The protein belongs to the UbiA prenyltransferase family. Protoheme IX farnesyltransferase subfamily.

The protein resides in the cell inner membrane. The catalysed reaction is heme b + (2E,6E)-farnesyl diphosphate + H2O = Fe(II)-heme o + diphosphate. The protein operates within porphyrin-containing compound metabolism; heme O biosynthesis; heme O from protoheme: step 1/1. In terms of biological role, converts heme B (protoheme IX) to heme O by substitution of the vinyl group on carbon 2 of heme B porphyrin ring with a hydroxyethyl farnesyl side group. In Aromatoleum aromaticum (strain DSM 19018 / LMG 30748 / EbN1) (Azoarcus sp. (strain EbN1)), this protein is Protoheme IX farnesyltransferase.